The following is a 452-amino-acid chain: UPF0210 protein CHY_1509 (452 aa).

It belongs to the UPF0210 family. As to quaternary structure, homodimer.

This chain is UPF0210 protein CHY_1509, found in Carboxydothermus hydrogenoformans (strain ATCC BAA-161 / DSM 6008 / Z-2901).